The chain runs to 226 residues: UPF0758 protein SGO_1229 (226 aa).

The region spanning 103–225 (RILSSQKLAK…YYSYREETDL (123 aa)) is the MPN domain. Zn(2+) contacts are provided by His-174, His-176, and Asp-187. The short motif at 174-187 (HNHPSGATRPSRDD) is the JAMM motif element.

This sequence belongs to the UPF0758 family.

This chain is UPF0758 protein SGO_1229, found in Streptococcus gordonii (strain Challis / ATCC 35105 / BCRC 15272 / CH1 / DL1 / V288).